Consider the following 437-residue polypeptide: Protein farnesyltransferase subunit beta (437 aa).

5 PFTB repeats span residues 123–164 (ATDV…CIIG), 174–215 (REKL…SLTN), 222–263 (FEGT…VILK), 270–312 (LKSL…PLLH), and 332–374 (QQAL…SIAQ). (2E,6E)-farnesyl diphosphate-binding positions include 248–251 (HGGY) and 291–294 (RCNK). Positions 297 and 299 each coordinate Zn(2+). 300-303 (YSFW) lines the (2E,6E)-farnesyl diphosphate pocket. H362 lines the Zn(2+) pocket. S432 is modified (phosphoserine). Residue T436 is modified to Phosphothreonine.

It belongs to the protein prenyltransferase subunit beta family. Heterodimer of FNTA and FNTB. Zn(2+) serves as cofactor.

It carries out the reaction L-cysteinyl-[protein] + (2E,6E)-farnesyl diphosphate = S-(2E,6E)-farnesyl-L-cysteinyl-[protein] + diphosphate. Essential subunit of the farnesyltransferase complex. Catalyzes the transfer of a farnesyl moiety from farnesyl diphosphate to a cysteine at the fourth position from the C-terminus of several proteins having the C-terminal sequence Cys-aliphatic-aliphatic-X. In Mus musculus (Mouse), this protein is Protein farnesyltransferase subunit beta (Fntb).